Consider the following 349-residue polypeptide: Hydroxymethylglutaryl-CoA synthase (349 aa).

D29 provides a ligand contact to (3S)-3-hydroxy-3-methylglutaryl-CoA. Catalysis depends on E81, which acts as the Proton donor/acceptor. Residues C113, S154, T202, and H235 each coordinate (3S)-3-hydroxy-3-methylglutaryl-CoA. C113 serves as the catalytic Acyl-thioester intermediate. H235 functions as the Proton donor/acceptor in the catalytic mechanism. R240 lines the CoA pocket. Positions 244, 267, and 297 each coordinate (3S)-3-hydroxy-3-methylglutaryl-CoA.

Belongs to the thiolase-like superfamily. Archaeal HMG-CoA synthase family. Interacts with acetoacetyl-CoA thiolase that catalyzes the precedent step in the pathway and with a DUF35 protein. The acetoacetyl-CoA thiolase/HMG-CoA synthase complex channels the intermediate via a fused CoA-binding site, which allows for efficient coupling of the endergonic thiolase reaction with the exergonic HMGCS reaction.

It carries out the reaction acetoacetyl-CoA + acetyl-CoA + H2O = (3S)-3-hydroxy-3-methylglutaryl-CoA + CoA + H(+). It functions in the pathway metabolic intermediate biosynthesis; (R)-mevalonate biosynthesis; (R)-mevalonate from acetyl-CoA: step 2/3. In terms of biological role, catalyzes the condensation of acetyl-CoA with acetoacetyl-CoA to form 3-hydroxy-3-methylglutaryl-CoA (HMG-CoA). Functions in the mevalonate (MVA) pathway leading to isopentenyl diphosphate (IPP), a key precursor for the biosynthesis of isoprenoid compounds that are building blocks of archaeal membrane lipids. This chain is Hydroxymethylglutaryl-CoA synthase, found in Pyrobaculum arsenaticum (strain DSM 13514 / JCM 11321 / PZ6).